The primary structure comprises 124 residues: Small ribosomal subunit protein uS12 (124 aa).

D89 carries the post-translational modification 3-methylthioaspartic acid.

It belongs to the universal ribosomal protein uS12 family. Part of the 30S ribosomal subunit. Contacts proteins S8 and S17. May interact with IF1 in the 30S initiation complex.

In terms of biological role, with S4 and S5 plays an important role in translational accuracy. Functionally, interacts with and stabilizes bases of the 16S rRNA that are involved in tRNA selection in the A site and with the mRNA backbone. Located at the interface of the 30S and 50S subunits, it traverses the body of the 30S subunit contacting proteins on the other side and probably holding the rRNA structure together. The combined cluster of proteins S8, S12 and S17 appears to hold together the shoulder and platform of the 30S subunit. The chain is Small ribosomal subunit protein uS12 from Shewanella loihica (strain ATCC BAA-1088 / PV-4).